The following is a 79-amino-acid chain: Acyl carrier protein (79 aa).

One can recognise a Carrier domain in the interval 2-77; the sequence is SEIGERVKKI…DAVKFLEKNA (76 aa). Ser-37 bears the O-(pantetheine 4'-phosphoryl)serine mark.

The protein belongs to the acyl carrier protein (ACP) family. In terms of processing, 4'-phosphopantetheine is transferred from CoA to a specific serine of apo-ACP by AcpS. This modification is essential for activity because fatty acids are bound in thioester linkage to the sulfhydryl of the prosthetic group.

The protein localises to the cytoplasm. It participates in lipid metabolism; fatty acid biosynthesis. Functionally, carrier of the growing fatty acid chain in fatty acid biosynthesis. This Rhodopseudomonas palustris (strain BisA53) protein is Acyl carrier protein.